Reading from the N-terminus, the 216-residue chain is Probable GTP-binding protein EngB (216 aa).

Residues 26 to 200 (EGIEIAFAGR…RAKLDTWFAP (175 aa)) enclose the EngB-type G domain. Residues 34–41 (GRSNAGKS), 61–65 (GRTQL), 79–82 (DLPG), 146–149 (TKAD), and 179–181 (YSS) each bind GTP. Mg(2+) contacts are provided by S41 and T63.

Belongs to the TRAFAC class TrmE-Era-EngA-EngB-Septin-like GTPase superfamily. EngB GTPase family. Mg(2+) serves as cofactor.

In terms of biological role, necessary for normal cell division and for the maintenance of normal septation. In Vibrio vulnificus (strain YJ016), this protein is Probable GTP-binding protein EngB.